The following is a 447-amino-acid chain: Glycerol-3-phosphate acyltransferase ATS11, chloroplastic (447 aa).

A disordered region spans residues 1–21 (MFILSSSSSLPSPLSLSSSRV). Residues 1 to 48 (MFILSSSSSLPSPLSLSSSRVSLPPPSSSSLNLLPLSPHFQPPNLACS) constitute a chloroplast transit peptide. Positions 217–222 (HQTEAD) match the HXXXXD motif motif.

It belongs to the GPAT/DAPAT family.

The protein resides in the plastid. It is found in the chloroplast stroma. The catalysed reaction is a fatty acyl-[ACP] + sn-glycerol 3-phosphate = a 1-acyl-sn-glycero-3-phosphate + holo-[ACP]. The enzyme catalyses sn-glycerol 3-phosphate + an acyl-CoA = a 1-acyl-sn-glycero-3-phosphate + CoA. It functions in the pathway phospholipid metabolism; CDP-diacylglycerol biosynthesis; CDP-diacylglycerol from sn-glycerol 3-phosphate: step 1/3. Functionally, esterifies the acyl-group from acyl-acyl carrier proteins (acyl-ACPs) to the sn-1 position of glycerol-3-phosphate. The physiological acyl donors in chloroplasts are acyl-ACPs, but acyl-CoAs are used as artificial donor for in vitro reactions. The enzyme from chilling-resistant plants discriminates against non-fluid palmitic acid and selects oleic acid whereas the enzyme from sensitive plants accepts both fatty acids. Squash is chilling-sensitive. Preferably utilizes oleoyl groups (18:1-ACP) and has lower affinity to palmitoyl (16:0-ACP) and stearoyl groups (18:0-ACP). The chain is Glycerol-3-phosphate acyltransferase ATS11, chloroplastic from Cucurbita moschata (Winter crookneck squash).